Here is a 483-residue protein sequence, read N- to C-terminus: Altronate oxidoreductase (483 aa).

Position 18 to 29 (18 to 29 (IIQFGEGNFLRA)) interacts with NAD(+).

Belongs to the mannitol dehydrogenase family. UxaB subfamily.

It catalyses the reaction D-altronate + NAD(+) = keto-D-tagaturonate + NADH + H(+). It functions in the pathway carbohydrate metabolism; pentose and glucuronate interconversion. This Klebsiella pneumoniae (strain 342) protein is Altronate oxidoreductase.